The primary structure comprises 1963 residues: Immunoglobulin A1 protease (1963 aa).

The signal sequence occupies residues 1-36; the sequence is MEKYFGEKQERFSFRKLSVGLVSATISSLFFMSVLA. The propeptide occupies 37-99; the sequence is SSSVDAQETA…QNQLAELPNT (63 aa). The LPXTG sorting signal motif lies at 96 to 100; it reads LPNTG. The residue at position 99 (threonine 99) is a Pentaglycyl murein peptidoglycan amidated threonine. The next 2 membrane-spanning stretches (helical) occupy residues 106-125 and 132-154; these read QALVAGASLAALGILIFAVS and KTVLHLVLVAGMGNGVLVSVHAL. Topologically, residues 155–1963 are extracellular; it reads ENHLLLNYNT…FRSSIFENKK (1809 aa). A disordered region spans residues 253–305; sequence KPFSTELINPRKEEKQSSDSQEQLAEHKNLETKKEEKISPKEKTGVNTLNPQD. The segment covering 276 to 296 has biased composition (basic and acidic residues); sequence LAEHKNLETKKEEKISPKEKT. Residues 314 to 393 form the G5 domain; it reads KPELLYREET…PRIVEKGTKK (80 aa). The disordered stretch occupies residues 402-681; that stretch reads ETGVEHKDVQ…GQTEPEKKLE (280 aa). Repeat copies occupy residues 419-435, 436-452, and 453-469. Positions 419–469 are 3 X 17 AA approximate tandem repeats; that stretch reads AIQPELPEAVVSDKGEPEVQPTLPEAVVTDKGETEVQPESPDTVVSDKGEP. Positions 485-511 are enriched in basic and acidic residues; it reads VKPETPVEKTKEQGPEKTEEVPVKPTE. 2 stretches are compositionally biased toward polar residues: residues 516 to 529 and 538 to 572; these read NPNEGTTEGTSIQE and EESTTNSEKVSPDTSSENTGEVSSNPSDSTTSVGE. The span at 574–591 shows a compositional bias: basic and acidic residues; it reads NKPEHNDSKNENSEKTVE. Composition is skewed to polar residues over residues 618–639 and 648–674; these read EETQTNSGKIANENTGEVSNKP and ESNQPEKNGTATKPENSGNTTSENGQT. Histidine 1604 is a Zn(2+) binding site. Glutamate 1605 is a catalytic residue. Zn(2+)-binding residues include histidine 1608 and glutamate 1628.

Belongs to the peptidase M26 family. It depends on Zn(2+) as a cofactor. The Gram-positive cell-wall anchor motif LPXTG is located in the N-terminal part, in contrast to such motifs in other known streptococcal and staphylococcal proteins. The protease could be cleaved by the sortase and anchored in the membrane via the two potential N-terminal transmembrane domains, whereas the propeptide located prior to the LPXTG motif would remain attached to the cell wall peptidoglycan by an amide bond.

It localises to the secreted. The protein resides in the cell wall. Its subcellular location is the membrane. It catalyses the reaction Cleavage of Pro-|-Thr bond in the hinge region of the heavy chain of human IgA.. Functionally, zinc metalloproteinase which cleaves human immunoglobulin A1 (IgA1) in the hinge region. This Streptococcus pneumoniae (strain ATCC BAA-255 / R6) protein is Immunoglobulin A1 protease (iga).